Reading from the N-terminus, the 944-residue chain is Valine--tRNA ligase (944 aa).

Residues 43-53 (PNVTGTLHMGH) carry the 'HIGH' region motif. The short motif at 550–554 (KMSKS) is the 'KMSKS' region element. Residue Lys553 participates in ATP binding. The stretch at 878–942 (LVDMDAERTR…QLTGLREQRA (65 aa)) forms a coiled coil.

The protein belongs to the class-I aminoacyl-tRNA synthetase family. ValS type 1 subfamily. As to quaternary structure, monomer.

Its subcellular location is the cytoplasm. The enzyme catalyses tRNA(Val) + L-valine + ATP = L-valyl-tRNA(Val) + AMP + diphosphate. In terms of biological role, catalyzes the attachment of valine to tRNA(Val). As ValRS can inadvertently accommodate and process structurally similar amino acids such as threonine, to avoid such errors, it has a 'posttransfer' editing activity that hydrolyzes mischarged Thr-tRNA(Val) in a tRNA-dependent manner. In Xanthomonas axonopodis pv. citri (strain 306), this protein is Valine--tRNA ligase.